The following is a 61-amino-acid chain: ATP synthase subunit J, mitochondrial (61 aa).

Residues 13–32 form a helical membrane-spanning segment; it reads LVKYYWPFFVGFGLTFYGVA.

As to quaternary structure, F-type ATP synthases have 2 components, the catalytic core F(1) and the membrane-embedded component F(0), linked together by a central stalk and a peripheral stalk. The central stalk, also called rotor shaft, is often seen as part of F(1). The peripheral stalk is seen as part of F(0). F(0) contains the membrane channel next to the rotor. F-type ATP synthases form dimers but each monomer functions independently in ATP generation. The dimer consists of 18 different polypeptides: ATP1 (subunit alpha, part of F(1), 3 molecules per monomer), ATP2 (subunit beta, part of F(1), 3 molecules per monomer), ATP3 (subunit gamma, part of the central stalk), ATP4 (subunit b, part of the peripheral stalk), ATP5/OSCP (subunit 5/OSCP, part of the peripheral stalk), ATP6 (subunit a, part of the peripheral stalk), ATP7 (subunit d, part of the peripheral stalk), ATP8 (subunit 8, part of the peripheral stalk), OLI1 (subunit c, part of the rotor, 10 molecules per monomer), ATP14 (subunit h, part of the peripheral stalk), ATP15 (subunit epsilon, part of the central stalk), ATP16 (subunit delta, part of the central stalk), ATP17 (subunit f, part of the peripheral stalk), ATP18 (subunit i/j, part of the peripheral stalk). Dimer-specific subunits are ATP19 (subunit k, at interface between monomers), ATP20 (subunit g, at interface between monomers), TIM11 (subunit e, at interface between monomers). Also contains subunit L.

The protein resides in the mitochondrion inner membrane. Mitochondrial membrane ATP synthase (F(1)F(0) ATP synthase or Complex V) produces ATP from ADP in the presence of a proton gradient across the membrane which is generated by electron transport complexes of the respiratory chain. F-type ATP synthases consist of two structural domains, F(1) - containing the extramembraneous catalytic core, and F(0) - containing the membrane proton channel, linked together by a central stalk and a peripheral stalk. During catalysis, ATP synthesis in the catalytic domain of F(1) is coupled via a rotary mechanism of the central stalk subunits to proton translocation. Part of the complex F(0) domain. Minor subunit located with subunit a/ATP6 in the membrane. The sequence is that of ATP synthase subunit J, mitochondrial from Pichia angusta (Yeast).